The sequence spans 160 residues: Cytosolic iron-sulfur assembly component 2A (160 aa).

Zn(2+)-binding residues include His-89, His-123, Glu-150, and Glu-153.

This sequence belongs to the MIP18 family. In terms of assembly, monomer and homodimer. Component of the CIA complex. Interacts with CIAO1. Interacts with IREB2. Interacts with APAF1.

The protein resides in the cytoplasm. In terms of biological role, component of the cytosolic iron-sulfur protein assembly (CIA) complex, a multiprotein complex that mediates the incorporation of iron-sulfur cluster into extramitochondrial Fe/S proteins. As a CIA complex component and in collaboration with CIAO1 specifically matures ACO1 and stabilizes IREB2, connecting cytosolic iron-sulfur protein maturation with cellular iron regulation. May play a role in chromosome segregation through establishment of sister chromatid cohesion. May induce apoptosis in collaboration with APAF1. The chain is Cytosolic iron-sulfur assembly component 2A from Bos taurus (Bovine).